The primary structure comprises 530 residues: Carbohydrate sulfotransferase 2 (530 aa).

The Cytoplasmic segment spans residues 1–54; the sequence is MSRSPQRALPPGALPRLLQAAPAAAPRALLPQWPRRPGRRWPASPLGMKVFRRK. Residues 55–75 traverse the membrane as a helical; Signal-anchor for type II membrane protein segment; the sequence is ALVLCAGYALLLVLTMLNLLD. The Lumenal segment spans residues 76–530; it reads YKWHKEPLQQ…SKTLLRKPRL (455 aa). The interval 89–119 is disordered; it reads DGPLGAAAGAAGGSWGRPGPPPAGPPRAHAR. Residue 173 to 179 participates in 3'-phosphoadenylyl sulfate binding; it reads WRSGSSF. The N-linked (GlcNAc...) asparagine glycan is linked to N243. 332 to 340 lines the 3'-phosphoadenylyl sulfate pocket; it reads RDPRAVASS. Residues N457 and N475 are each glycosylated (N-linked (GlcNAc...) asparagine).

The protein belongs to the sulfotransferase 1 family. Gal/GlcNAc/GalNAc subfamily. As to quaternary structure, homodimer; disulfide-linked. Homodimerization is not essential for enzyme activity. Glycosylation at Asn-475 is required for catalytic activity. In terms of tissue distribution, widely expressed. Highly expressed in bone marrow, peripheral blood leukocytes, spleen, brain, spinal cord, ovary and placenta. Expressed by high endothelial cells (HEVs) and leukocytes.

Its subcellular location is the golgi apparatus. The protein localises to the trans-Golgi network membrane. It catalyses the reaction 3-O-{N-acetyl-beta-D-glucosaminyl-(1-&gt;3)-beta-D-galactosyl-(1-&gt;3)-N-acetyl-alpha-D-galactosaminyl}-L-threonyl-[protein] + 3'-phosphoadenylyl sulfate = 3-O-{6-O-sulfo-N-acetyl-beta-D-glucosaminyl-(1-&gt;3)-beta-D-galactosyl-(1-&gt;3)-N-acetyl-alpha-D-galactosaminyl}-L-threonyl-[protein] + adenosine 3',5'-bisphosphate + H(+). The enzyme catalyses 3-O-{N-acetyl-beta-D-glucosaminyl-(1-&gt;3)-beta-D-galactosyl-(1-&gt;3)-N-acetyl-alpha-D-galactosaminyl}-L-seryl-[protein] + 3'-phosphoadenylyl sulfate = 3-O-{6-O-sulfo-N-acetyl-beta-D-glucosaminyl-(1-&gt;3)-beta-D-galactosyl-(1-&gt;3)-N-acetyl-alpha-D-galactosaminyl}-L-seryl-[protein] + adenosine 3',5'-bisphosphate + H(+). It carries out the reaction a 3-O-{beta-D-galactosyl-(1-&gt;3)-[N-acetyl-beta-D-glucosaminyl-(1-&gt;6)]-N-acetyl-alpha-D-galactosaminyl}-L-threonyl-[protein] + 3'-phosphoadenylyl sulfate = 3-O-{beta-D-galactosyl-(1-&gt;3)-[6-O-sulfo-N-acetyl-beta-D-glucosaminyl-(1-&gt;6)]-N-acetyl-alpha-D-galactosaminyl}-L-threonyl-[protein] + adenosine 3',5'-bisphosphate + H(+). The catalysed reaction is 3-O-{beta-D-galactosyl-(1-&gt;3)-[N-acetyl-beta-D-glucosaminyl-(1-&gt;6)]-N-acetyl-alpha-D-galactosaminyl}-L-seryl-[protein] + 3'-phosphoadenylyl sulfate = 3-O-{beta-D-galactosyl-(1-&gt;3)-[6-O-sulfo-N-acetyl-beta-D-glucosaminyl-(1-&gt;6)]-N-acetyl-alpha-D-galactosaminyl}-L-seryl-[protein] + adenosine 3',5'-bisphosphate + H(+). It participates in protein modification; carbohydrate sulfation. In terms of biological role, sulfotransferase that utilizes 3'-phospho-5'-adenylyl sulfate (PAPS) as sulfonate donor to catalyze the transfer of sulfate to position 6 of non-reducing N-acetylglucosamine (GlcNAc) residues within keratan-like structures on N-linked glycans and within mucin-associated glycans that can ultimately serve as SELL ligands. SELL ligands are present in high endothelial cells (HEVs) and play a central role in lymphocyte homing at sites of inflammation. Participates in biosynthesis of the SELL ligand sialyl 6-sulfo Lewis X and in lymphocyte homing to Peyer patches. Has no activity toward O-linked sugars. Its substrate specificity may be influenced by its subcellular location. Sulfates GlcNAc residues at terminal, non-reducing ends of oligosaccharide chains. This is Carbohydrate sulfotransferase 2 (CHST2) from Homo sapiens (Human).